Reading from the N-terminus, the 84-residue chain is U8-theraphotoxin-Hhn1c 2 (84 aa).

Positions 1-21 are cleaved as a signal peptide; the sequence is MKVVLLVCLVWMMAMMELVSC. 5 cysteine pairs are disulfide-bonded: C23–C35, C29–C44, C34–C67, C54–C75, and C69–C81.

The protein belongs to the AVIT (prokineticin) family. In terms of tissue distribution, expressed by the venom gland.

It is found in the secreted. The protein is U8-theraphotoxin-Hhn1c 2 of Cyriopagopus hainanus (Chinese bird spider).